The chain runs to 205 residues: Thymidylate kinase (205 aa).

Position 11-18 (11-18 (GVEGSGKS)) interacts with ATP.

The protein belongs to the thymidylate kinase family.

It catalyses the reaction dTMP + ATP = dTDP + ADP. Phosphorylation of dTMP to form dTDP in both de novo and salvage pathways of dTTP synthesis. This chain is Thymidylate kinase, found in Ruthia magnifica subsp. Calyptogena magnifica.